Consider the following 355-residue polypeptide: Uroporphyrinogen decarboxylase (355 aa).

Residues 27 to 31, Asp77, Tyr154, Thr209, and His327 contribute to the substrate site; that span reads RQAGR.

The protein belongs to the uroporphyrinogen decarboxylase family. Homodimer.

The protein resides in the cytoplasm. The catalysed reaction is uroporphyrinogen III + 4 H(+) = coproporphyrinogen III + 4 CO2. It functions in the pathway porphyrin-containing compound metabolism; protoporphyrin-IX biosynthesis; coproporphyrinogen-III from 5-aminolevulinate: step 4/4. In terms of biological role, catalyzes the decarboxylation of four acetate groups of uroporphyrinogen-III to yield coproporphyrinogen-III. This is Uroporphyrinogen decarboxylase from Yersinia pseudotuberculosis serotype O:1b (strain IP 31758).